The sequence spans 199 residues: Recombination protein RecR (199 aa).

The C4-type zinc finger occupies 58–73 (CSACGNVDTQDPCAIC). In terms of domain architecture, Toprim spans 81-176 (HILCIVEEVG…SVSRLAHGVP (96 aa)).

It belongs to the RecR family.

Functionally, may play a role in DNA repair. It seems to be involved in an RecBC-independent recombinational process of DNA repair. It may act with RecF and RecO. The sequence is that of Recombination protein RecR from Parvibaculum lavamentivorans (strain DS-1 / DSM 13023 / NCIMB 13966).